Here is a 164-residue protein sequence, read N- to C-terminus: Peptidyl-prolyl cis-trans isomerase A (164 aa).

M1 is subject to N-acetylmethionine. Position 2 is an N-acetylvaline; in Peptidyl-prolyl cis-trans isomerase A, N-terminally processed (V2). One can recognise a PPIase cyclophilin-type domain in the interval 7–163 (FFDISADGEP…KKITISDCGQ (157 aa)). An N6-acetyllysine; alternate modification is found at K28. K28 participates in a covalent cross-link: Glycyl lysine isopeptide (Lys-Gly) (interchain with G-Cter in SUMO2); alternate. K28 is covalently cross-linked (Glycyl lysine isopeptide (Lys-Gly) (interchain with G-Cter in ubiquitin); alternate). K44 carries the N6-acetyllysine modification. A Phosphoserine modification is found at S77. K82 carries the post-translational modification N6-acetyllysine; alternate. K82 is covalently cross-linked (Glycyl lysine isopeptide (Lys-Gly) (interchain with G-Cter in SUMO2); alternate). T93 carries the phosphothreonine modification. An N-linked (GlcNAc...) asparagine glycan is attached at N108. N6-acetyllysine occurs at positions 125, 131, and 133.

This sequence belongs to the cyclophilin-type PPIase family. PPIase A subfamily. Interacts with protein phosphatase PPP3CA/calcineurin A. Interacts with PRPF19 isoform 2 (via N-terminus). Interacts with isoform 2 of BSG/CD147. Interacts with FOXO1; the interaction promotes FOXO1 dephosphorylation, nuclear accumulation and transcriptional activity. Interacts with integrin ITGA2B:ITGB3; the interaction is ROS and peptidyl-prolyl cis-trans isomerase (PPIase) activity-dependent and is increased in the presence of thrombin. Interacts with MAP3K5. Interacts with TARDBP; the interaction is dependent on the RNA-binding activity of TARDBP and the PPIase activity of PPIA/CYPA and the acetylation of PPIA/CYPA at Lys-125 favors the interaction. Interacts with HNRNPA1, HNRNPA2B1, HNRNPC, RBMX, HNRNPK and HNRNPM. Acetylation at Lys-125 markedly inhibits catalysis of cis to trans isomerization. PPIA acetylation also antagonizes the immunosuppressive effects of cyclosporine by inhibiting the sequential steps of cyclosporine binding and calcineurin inhibition. Acetylation at Lys-125 favors the interaction with TARDBP.

It is found in the cytoplasm. Its subcellular location is the secreted. It localises to the nucleus. It carries out the reaction [protein]-peptidylproline (omega=180) = [protein]-peptidylproline (omega=0). Its activity is regulated as follows. Binds cyclosporin A (CsA). CsA mediates some of its effects via an inhibitory action on PPIase. Its function is as follows. Catalyzes the cis-trans isomerization of proline imidic peptide bonds in oligopeptides. Exerts a strong chemotactic effect on leukocytes partly through activation of one of its membrane receptors BSG/CD147, initiating a signaling cascade that culminates in MAPK/ERK activation. Activates endothelial cells (ECs) in a proinflammatory manner by stimulating activation of NF-kappa-B and ERK, JNK and p38 MAP-kinases and by inducing expression of adhesion molecules including SELE and VCAM1. Induces apoptosis in ECs by promoting the FOXO1-dependent expression of CCL2 and BCL2L11 which are involved in EC chemotaxis and apoptosis. In response to oxidative stress, initiates proapoptotic and antiapoptotic signaling in ECs via activation of NF-kappa-B and AKT1 and up-regulation of antiapoptotic protein BCL2. Negatively regulates MAP3K5/ASK1 kinase activity, autophosphorylation and oxidative stress-induced apoptosis mediated by MAP3K5/ASK1. Necessary for the assembly of TARDBP in heterogeneous nuclear ribonucleoprotein (hnRNP) complexes and regulates TARDBP binding to RNA UG repeats and TARDBP-dependent expression of HDAC6, ATG7 and VCP which are involved in clearance of protein aggregates. Plays an important role in platelet activation and aggregation. Regulates calcium mobilization and integrin ITGA2B:ITGB3 bidirectional signaling via increased ROS production as well as by facilitating the interaction between integrin and the cell cytoskeleton. Binds heparan sulfate glycosaminoglycans. The sequence is that of Peptidyl-prolyl cis-trans isomerase A (PPIA) from Cricetulus griseus (Chinese hamster).